The following is a 216-amino-acid chain: Kynurenine formamidase (216 aa).

Trp-25 is a binding site for substrate. Residues His-55, His-59, and Asp-61 each contribute to the Zn(2+) site. The active-site Proton donor/acceptor is His-65. Zn(2+) is bound by residues His-167 and Glu-179.

The protein belongs to the Cyclase 1 superfamily. KynB family. As to quaternary structure, homodimer. The cofactor is Zn(2+).

It catalyses the reaction N-formyl-L-kynurenine + H2O = L-kynurenine + formate + H(+). The protein operates within amino-acid degradation; L-tryptophan degradation via kynurenine pathway; L-kynurenine from L-tryptophan: step 2/2. Catalyzes the hydrolysis of N-formyl-L-kynurenine to L-kynurenine, the second step in the kynurenine pathway of tryptophan degradation. This is Kynurenine formamidase from Cupriavidus taiwanensis (strain DSM 17343 / BCRC 17206 / CCUG 44338 / CIP 107171 / LMG 19424 / R1) (Ralstonia taiwanensis (strain LMG 19424)).